The primary structure comprises 131 residues: Small ribosomal subunit protein uS11 (131 aa).

This sequence belongs to the universal ribosomal protein uS11 family. Part of the 30S ribosomal subunit. Interacts with proteins S7 and S18. Binds to IF-3.

Located on the platform of the 30S subunit, it bridges several disparate RNA helices of the 16S rRNA. Forms part of the Shine-Dalgarno cleft in the 70S ribosome. This is Small ribosomal subunit protein uS11 from Paramagnetospirillum magneticum (strain ATCC 700264 / AMB-1) (Magnetospirillum magneticum).